A 339-amino-acid chain; its full sequence is Phenylalanine--tRNA ligase alpha subunit (339 aa).

A Mg(2+)-binding site is contributed by Glu-254.

Belongs to the class-II aminoacyl-tRNA synthetase family. Phe-tRNA synthetase alpha subunit type 1 subfamily. As to quaternary structure, tetramer of two alpha and two beta subunits. It depends on Mg(2+) as a cofactor.

It localises to the cytoplasm. It catalyses the reaction tRNA(Phe) + L-phenylalanine + ATP = L-phenylalanyl-tRNA(Phe) + AMP + diphosphate + H(+). This chain is Phenylalanine--tRNA ligase alpha subunit, found in Clostridium botulinum (strain Langeland / NCTC 10281 / Type F).